The chain runs to 308 residues: 3'(2'),5'-bisphosphate nucleotidase 1 (308 aa).

The residue at position 2 (A2) is an N-acetylalanine. Catalysis depends on D51, which acts as the Proton acceptor. Mg(2+)-binding residues include E74, D117, V119, and D120. T122 functions as the Proton acceptor in the catalytic mechanism. Residue T122 is modified to Phosphothreonine. 4 residues coordinate AMP: T195, H198, G220, and K224. S240 is modified (phosphoserine). K244 is subject to N6-succinyllysine. Residue D247 participates in Mg(2+) binding.

The protein belongs to the inositol monophosphatase superfamily. Mg(2+) serves as cofactor. Highly expressed in heart, brain, spleen, lung, liver, skeletal muscle, kidney and testis.

It catalyses the reaction adenosine 3',5'-bisphosphate + H2O = AMP + phosphate. The catalysed reaction is adenosine 2',5'-bisphosphate + H2O = AMP + phosphate. It carries out the reaction 3'-phosphoadenylyl sulfate + H2O = adenosine 5'-phosphosulfate + phosphate. The enzyme catalyses 1D-myo-inositol 1,4-bisphosphate + H2O = 1D-myo-inositol 4-phosphate + phosphate. It catalyses the reaction 1D-myo-inositol 1,3,4-trisphosphate + H2O = 1D-myo-inositol 3,4-bisphosphate + phosphate. Inhibited by Li(+) and Ca(2+), but not by Na(+). In terms of biological role, phosphatase that converts 3'(2')-phosphoadenosine 5'-phosphate (PAP) to AMP and adenosine 3'-phosphate 5'-phosphosulfate (PAPS) to adenosine 5'-phosphosulfate (APS). Is also able to hydrolyze inositol 1,4-bisphosphate (Ins(1,4)P2) and inositol 1,3,4-trisphosphate (Ins(1,3,4)P3), but is not active on AMP, 3'-AMP, fructose-1,6-bisphosphate, Ins(1)P, Ins(2)P and Ins(1,4,5)P3. Probably prevents the toxic accumulation of PAP, a compound which inhibits a variety of proteins, including PAPS-utilizing enzymes such as sulfotransferases, and RNA processing enzymes. Could also play a role in inositol recycling and phosphoinositide metabolism. The polypeptide is 3'(2'),5'-bisphosphate nucleotidase 1 (Bpnt1) (Rattus norvegicus (Rat)).